A 467-amino-acid chain; its full sequence is Cysteine--tRNA ligase (467 aa).

C29 serves as a coordination point for Zn(2+). A 'HIGH' region motif is present at residues 31–41 (PTVYNYVHIGN). Zn(2+)-binding residues include C209, H234, and E238. A 'KMSKS' region motif is present at residues 267 to 271 (KMSKS). An ATP-binding site is contributed by K270.

Belongs to the class-I aminoacyl-tRNA synthetase family. In terms of assembly, monomer. It depends on Zn(2+) as a cofactor.

It is found in the cytoplasm. It catalyses the reaction tRNA(Cys) + L-cysteine + ATP = L-cysteinyl-tRNA(Cys) + AMP + diphosphate. The polypeptide is Cysteine--tRNA ligase (Xylella fastidiosa (strain Temecula1 / ATCC 700964)).